The following is a 924-amino-acid chain: DNA repair and recombination protein RDH54 (924 aa).

The segment covering M1–P10 has biased composition (basic and acidic residues). Disordered regions lie at residues M1–K21 and E155–G183. Low complexity predominate over residues T168 to T178. The 189-residue stretch at L299–G487 folds into the Helicase ATP-binding domain. I346 to K353 provides a ligand contact to ATP. The short motif at N472–N475 is the DEGH box element. A Glycyl lysine isopeptide (Lys-Gly) (interchain with G-Cter in ubiquitin) cross-link involves residue K615. The 160-residue stretch at K631–S790 folds into the Helicase C-terminal domain.

This sequence belongs to the SNF2/RAD54 helicase family. As to quaternary structure, interacts with RAD51 and DMC1.

The protein resides in the nucleus. It catalyses the reaction ATP + H2O = ADP + phosphate + H(+). Involved in the recombinational repair of double-strand breaks (DSB) in DNA during mitosis and meiosis. Has DNA dependent ATPase activity. Promotes D-loop (displacement loop) formation with RAD51 recombinase. Modifies the topology of double-stranded DNA during the D-loop reaction to facilitate the invasion of the homologous duplex molecule by the initiating single-stranded DNA substrate. Required for adaptation from G2/M checkpoint arrest induced by a double strand break, by participating in monitoring the extent of single-stranded DNA produced by resection of DNA ends. This role is distinct from its roles in recombination. Promotes colocalization of RAD51 and DMC1 during meiotic recombination. Involved in crossover interference. This Saccharomyces cerevisiae (strain RM11-1a) (Baker's yeast) protein is DNA repair and recombination protein RDH54 (RDH54).